Consider the following 239-residue polypeptide: 2,3,4,5-tetrahydropyridine-2,6-dicarboxylate N-acetyltransferase (239 aa).

Belongs to the transferase hexapeptide repeat family. DapH subfamily.

The enzyme catalyses (S)-2,3,4,5-tetrahydrodipicolinate + acetyl-CoA + H2O = L-2-acetamido-6-oxoheptanedioate + CoA. It participates in amino-acid biosynthesis; L-lysine biosynthesis via DAP pathway; LL-2,6-diaminopimelate from (S)-tetrahydrodipicolinate (acetylase route): step 1/3. Its function is as follows. Catalyzes the transfer of an acetyl group from acetyl-CoA to tetrahydrodipicolinate. The protein is 2,3,4,5-tetrahydropyridine-2,6-dicarboxylate N-acetyltransferase of Staphylococcus aureus (strain MRSA252).